Here is a 309-residue protein sequence, read N- to C-terminus: Homoserine O-succinyltransferase (309 aa).

The active-site Acyl-thioester intermediate is the Cys142. Substrate contacts are provided by Lys163 and Ser192. His235 acts as the Proton acceptor in catalysis. Glu237 is an active-site residue. Residue Arg249 participates in substrate binding.

This sequence belongs to the MetA family. As to quaternary structure, homodimer.

It is found in the cytoplasm. It catalyses the reaction L-homoserine + succinyl-CoA = O-succinyl-L-homoserine + CoA. The protein operates within amino-acid biosynthesis; L-methionine biosynthesis via de novo pathway; O-succinyl-L-homoserine from L-homoserine: step 1/1. In terms of biological role, transfers a succinyl group from succinyl-CoA to L-homoserine, forming succinyl-L-homoserine. The polypeptide is Homoserine O-succinyltransferase (Escherichia coli O17:K52:H18 (strain UMN026 / ExPEC)).